We begin with the raw amino-acid sequence, 448 residues long: Histidinol dehydrogenase (448 aa).

Residues Tyr-136, Gln-197, and Asn-220 each coordinate NAD(+). Positions 243, 265, and 268 each coordinate substrate. Positions 265 and 268 each coordinate Zn(2+). Active-site proton acceptor residues include Glu-333 and His-334. Positions 334, 367, 421, and 426 each coordinate substrate. Asp-367 provides a ligand contact to Zn(2+). His-426 provides a ligand contact to Zn(2+).

It belongs to the histidinol dehydrogenase family. Zn(2+) serves as cofactor.

It catalyses the reaction L-histidinol + 2 NAD(+) + H2O = L-histidine + 2 NADH + 3 H(+). Its pathway is amino-acid biosynthesis; L-histidine biosynthesis; L-histidine from 5-phospho-alpha-D-ribose 1-diphosphate: step 9/9. In terms of biological role, catalyzes the sequential NAD-dependent oxidations of L-histidinol to L-histidinaldehyde and then to L-histidine. In Pseudomonas savastanoi pv. phaseolicola (strain 1448A / Race 6) (Pseudomonas syringae pv. phaseolicola (strain 1448A / Race 6)), this protein is Histidinol dehydrogenase.